Consider the following 332-residue polypeptide: Ketol-acid reductoisomerase (NADP(+)) (332 aa).

The 182-residue stretch at 1 to 182 folds into the KARI N-terminal Rossmann domain; the sequence is MAVIYYDKDC…GSNRAGILET (182 aa). NADP(+)-binding positions include 25–28 and 83–86; these read YGAQ and DTSQ. His108 is an active-site residue. Position 134 (Gly134) interacts with NADP(+). In terms of domain architecture, KARI C-terminal knotted spans 183–328; that stretch reads TFAEETETDL…AELRSMMSWL (146 aa). 4 residues coordinate Mg(2+): Asp191, Glu195, Glu227, and Glu231. A substrate-binding site is contributed by Ser252.

The protein belongs to the ketol-acid reductoisomerase family. It depends on Mg(2+) as a cofactor.

The enzyme catalyses (2R)-2,3-dihydroxy-3-methylbutanoate + NADP(+) = (2S)-2-acetolactate + NADPH + H(+). The catalysed reaction is (2R,3R)-2,3-dihydroxy-3-methylpentanoate + NADP(+) = (S)-2-ethyl-2-hydroxy-3-oxobutanoate + NADPH + H(+). It functions in the pathway amino-acid biosynthesis; L-isoleucine biosynthesis; L-isoleucine from 2-oxobutanoate: step 2/4. It participates in amino-acid biosynthesis; L-valine biosynthesis; L-valine from pyruvate: step 2/4. In terms of biological role, involved in the biosynthesis of branched-chain amino acids (BCAA). Catalyzes an alkyl-migration followed by a ketol-acid reduction of (S)-2-acetolactate (S2AL) to yield (R)-2,3-dihydroxy-isovalerate. In the isomerase reaction, S2AL is rearranged via a Mg-dependent methyl migration to produce 3-hydroxy-3-methyl-2-ketobutyrate (HMKB). In the reductase reaction, this 2-ketoacid undergoes a metal-dependent reduction by NADPH to yield (R)-2,3-dihydroxy-isovalerate. This Dehalococcoides mccartyi (strain ATCC BAA-2100 / JCM 16839 / KCTC 5957 / BAV1) protein is Ketol-acid reductoisomerase (NADP(+)).